Consider the following 1273-residue polypeptide: DNA-directed RNA polymerase subunit beta (1273 aa).

Positions 1252–1273 are disordered; the sequence is ADDQDLVVSSNDEEVSENDERS.

Belongs to the RNA polymerase beta chain family. As to quaternary structure, the RNAP catalytic core consists of 2 alpha, 1 beta, 1 beta' and 1 omega subunit. When a sigma factor is associated with the core the holoenzyme is formed, which can initiate transcription.

The catalysed reaction is RNA(n) + a ribonucleoside 5'-triphosphate = RNA(n+1) + diphosphate. In terms of biological role, DNA-dependent RNA polymerase catalyzes the transcription of DNA into RNA using the four ribonucleoside triphosphates as substrates. This is DNA-directed RNA polymerase subunit beta from Dehalococcoides mccartyi (strain CBDB1).